The sequence spans 165 residues: Polcalcin Cup a 4 (165 aa).

4 consecutive EF-hand domains span residues 22-57, 58-86, 91-126, and 127-162; these read QSVHELEEVFKKFDANGDGKISGSELADILRSMGSE, VDEAEVKAMMEEADTDGDGYVSLQEFVDL, ATVKDLKNAFKVFDRDCNGTISPAELCETLKSVGEP, and CTIEESKNIIHNVDKNGDGLINVEEFQTMMTSEMTD. Ca(2+) is bound by residues aspartate 35, asparagine 37, aspartate 39, lysine 41, glutamate 46, aspartate 71, aspartate 73, aspartate 75, tyrosine 77, glutamate 82, aspartate 104, aspartate 106, asparagine 108, threonine 110, glutamate 115, aspartate 140, asparagine 142, aspartate 144, and glutamate 151.

In terms of assembly, may exist as monomer and dimer. Expressed in mature pollen grains.

The sequence is that of Polcalcin Cup a 4 from Hesperocyparis arizonica (Arizona cypress).